A 133-amino-acid chain; its full sequence is Secreted effector protein SteB (133 aa).

Its subcellular location is the secreted. The protein resides in the host cytoplasm. Effector proteins function to alter host cell physiology and promote bacterial survival in host tissues. This Salmonella typhimurium (strain 14028s / SGSC 2262) protein is Secreted effector protein SteB (steB).